A 535-amino-acid chain; its full sequence is High affinity immunoglobulin alpha and immunoglobulin mu Fc receptor (535 aa).

The N-terminal stretch at 1–35 (MDQGAPAKPSEQKVPSLRTRWEILLLTLCLLHGSS) is a signal peptide. The Extracellular portion of the chain corresponds to 36–455 (MTPPHRRSHS…ALMEGESHTR (420 aa)). Residues 95–117 (GGAVTIHCHYAPSSVNRHQRKYW) form a mediates immunoglobulin Fc fragment-binding region. Positions 95-189 (GGAVTIHCHY…DMLFFSVNLT (95 aa)) constitute an Ig-like V-type domain. Residues C102 and C173 are joined by a disulfide bond. N187 carries N-linked (GlcNAc...) asparagine glycosylation. Disordered stretches follow at residues 201–360 (AAPA…LISE) and 405–430 (EGRSIDGSLENTTEESSPPTPSQLSV). 2 stretches are compositionally biased toward low complexity: residues 208-220 (PTTASPGAASSAG) and 241-253 (TVPTTGTSKTTSS). Residues 291–328 (KSRSMSSTTQGVWLWSTRNSVTPSVTTSEGRRQGTTPE) are compositionally biased toward polar residues. A compositionally biased stretch (basic and acidic residues) spans 330-346 (DGPRDETDVRVSPEAPR). Positions 413–429 (LENTTEESSPPTPSQLS) are enriched in polar residues. The chain crosses the membrane as a helical span at residues 456–476 (ILTPVSTVLALLLIAALILLK). At 477–535 (RSLGRQRTSQKKERVPRITLIQMTHFLPDKLPDEGKNFQQSNLLPPQASLTVLENDPRP) the chain is on the cytoplasmic side. Positions 507–535 (LPDEGKNFQQSNLLPPQASLTVLENDPRP) are disordered. Polar residues predominate over residues 513–528 (NFQQSNLLPPQASLTV).

Interacts with IGHM; this interaction facilitates the endocytosis of IgM-coated microbes and IgM-antigen immune complexes. Post-translationally, N-glycosylated. As to expression, expressed in several tissues including thymus, spleen, liver, kidney, small and large intestine, testis and placenta. Expressed by oligodendrocytes, B-cells and macrophages but not granulocytes, T-cells or NK cells (at protein level).

It localises to the cell membrane. Its function is as follows. Functions as a receptor for the Fc fragment of IgA and IgM. Binds IgA and IgM with high affinity and mediates their endocytosis. May function in the immune response to microbes mediated by IgA and IgM. This is High affinity immunoglobulin alpha and immunoglobulin mu Fc receptor (Fcamr) from Mus musculus (Mouse).